A 564-amino-acid polypeptide reads, in one-letter code: NADPH oxidase 1 (564 aa).

Residues methionine 1 to tryptophan 9 are Cytoplasmic-facing. A helical membrane pass occupies residues phenylalanine 10–phenylalanine 30. At leucine 31–lysine 44 the chain is on the extracellular side. A helical transmembrane segment spans residues isoleucine 45–cysteine 72. Positions arginine 54 to glutamate 283 constitute a Ferric oxidoreductase domain. Topologically, residues arginine 73 to lysine 102 are cytoplasmic. Residues histidine 101 and histidine 115 each coordinate heme. The helical transmembrane segment at leucine 103–phenylalanine 123 threads the bilayer. Topologically, residues aspartate 124–valine 168 are extracellular. N-linked (GlcNAc...) asparagine glycosylation is present at asparagine 162. Residues threonine 169–valine 189 traverse the membrane as a helical segment. Residues threonine 190–tyrosine 206 lie on the Cytoplasmic side of the membrane. A helical membrane pass occupies residues threonine 207–valine 227. 2 residues coordinate heme: histidine 209 and histidine 221. The Extracellular portion of the chain corresponds to arginine 228–glutamate 396. Asparagine 236 is a glycosylation site (N-linked (GlcNAc...) asparagine). Positions arginine 284–aspartate 391 constitute an FAD-binding FR-type domain. Histidine 338–serine 344 serves as a coordination point for FAD. A helical transmembrane segment spans residues valine 397–isoleucine 417. The segment at valine 397 to leucine 536 is interaction with NOXO1. At tryptophan 418 to phenylalanine 564 the chain is on the cytoplasmic side. A Phosphothreonine modification is found at threonine 430.

NOX1, NOXA1, NOXO1, RAC1 and CYBA forms a functional multimeric complex supporting reactive oxygen species (ROS) production. Interacts with NOXO1. Interacts (via FAD-binding FR-type domain) with ARHGEF7 (via PH domain). The phosphorylated form at Thr-430 interacts with NOXA1 with greater affinity. FAD serves as cofactor. Phosphorylation at Thr-430 mediated by PKC/PRKBC positively regulates its interaction with NOXA1 and enzyme activity. As to expression, detected in colon, uterus, prostate, and colon carcinoma, but not in peripheral blood leukocytes.

The protein resides in the cell projection. Its subcellular location is the invadopodium membrane. It is found in the cell membrane. It carries out the reaction NADPH + 2 O2 = 2 superoxide + NADP(+) + H(+). With respect to regulation, the oxidase activity is potentiated by NOXA1, NOXO1 and RAC1. Its function is as follows. NADPH oxidase that catalyzes the generation of superoxide from molecular oxygen utilizing NADPH as an electron donor. This is NADPH oxidase 1 from Homo sapiens (Human).